A 310-amino-acid chain; its full sequence is Phytoene synthase 2, chloroplastic (310 aa).

The N-terminal 25 residues, 1–25, are a transit peptide targeting the chloroplast; it reads DPDIVLPGNLGLLSEAYDRCGEVCA.

This sequence belongs to the phytoene/squalene synthase family. As to quaternary structure, monomer.

It is found in the plastid. The protein resides in the chloroplast. It carries out the reaction 2 (2E,6E,10E)-geranylgeranyl diphosphate = 15-cis-phytoene + 2 diphosphate. Its pathway is carotenoid biosynthesis; phytoene biosynthesis; all-trans-phytoene from geranylgeranyl diphosphate: step 1/1. Catalyzes the reaction from prephytoene diphosphate to phytoene. This is Phytoene synthase 2, chloroplastic (PSY2) from Solanum lycopersicum (Tomato).